Reading from the N-terminus, the 158-residue chain is MRLLLWVLLVTLVTFLSSGDAAPVDSNKQLERAAINKVTSRNLANDNSLKHEKRFLRGDRSNIVNLKDGDENEERKIGQKMTTALKSIKVWYLKWEQKILLPGFKKMAKKEMTYSKLMDRFRVRMMNSGRWGTPSGFKRYGRLYKDYLISINRADLTV.

Residues 1–21 (MRLLLWVLLVTLVTFLSSGDA) form the signal peptide. A RxLR-dEER motif is present at residues 54-75 (RFLRGDRSNIVNLKDGDENEER).

It belongs to the RxLR effector family.

It is found in the secreted. Its subcellular location is the host cell. Functionally, secreted effector that completely suppresses elicitor-induced cell death in host and enhances virulence of P.parasitica. The polypeptide is Secreted RxLR effector protein 2 (Phytophthora nicotianae (Potato buckeye rot agent)).